A 78-amino-acid chain; its full sequence is Large ribosomal subunit protein bL28 (78 aa).

Positions 1–23 (MSRVCQVSGKRVQTGNNVSHANN) are disordered. Residues 11–22 (RVQTGNNVSHAN) show a composition bias toward polar residues.

It belongs to the bacterial ribosomal protein bL28 family.

The chain is Large ribosomal subunit protein bL28 from Stenotrophomonas maltophilia (strain R551-3).